A 505-amino-acid polypeptide reads, in one-letter code: Geissoschizine oxidase (505 aa).

The helical transmembrane segment at 9 to 29 threads the bilayer; it reads FSSPAFFLLLPFLFLLIKPLI. Position 443 (C443) interacts with heme.

This sequence belongs to the cytochrome P450 family. Heme is required as a cofactor. In terms of tissue distribution, mainly expressed in roots.

It localises to the membrane. It catalyses the reaction (19E)-geissoschizine + reduced [NADPH--hemoprotein reductase] + O2 = akuammicine + formate + oxidized [NADPH--hemoprotein reductase] + H2O + H(+). It carries out the reaction (19E)-geissoschizine + reduced [NADPH--hemoprotein reductase] + O2 = 3,17-didehydrostemmadenine + oxidized [NADPH--hemoprotein reductase] + 2 H2O. The enzyme catalyses 3,17-didehydrostemmadenine = 17-dehydropreakuammicine. The protein operates within alkaloid biosynthesis. Functionally, monooxygenase involved in the biosynthesis of curare monoterpene indole alkaloids (MIAs), natural products such as strychnine, a neurotoxic compound used as a pesticide to control rodents, and its pharmacologically active derivatives, including brucine, used to regulate blood pressure. Curare alkaloids act as animal glycine receptor antagonists. Catalyzes the conversion of geissoschizine to dehydropreakuammicine by cyclization, which is spontaneously converted into akuammicine by aromatization. The sequence is that of Geissoschizine oxidase from Strychnos nux-vomica (Poison nut).